Reading from the N-terminus, the 387-residue chain is Succinate--CoA ligase [ADP-forming] subunit beta (387 aa).

Residues 9–244 (KAIFADNGIP…ITEENPAERE (236 aa)) form the ATP-grasp domain. Residues K46, 53–55 (GRG), E99, A102, and E107 each bind ATP. Mg(2+) is bound by residues N199 and D213. Residues N264 and 321–323 (GIV) each bind substrate.

This sequence belongs to the succinate/malate CoA ligase beta subunit family. Heterotetramer of two alpha and two beta subunits. Mg(2+) is required as a cofactor.

It carries out the reaction succinate + ATP + CoA = succinyl-CoA + ADP + phosphate. It catalyses the reaction GTP + succinate + CoA = succinyl-CoA + GDP + phosphate. It participates in carbohydrate metabolism; tricarboxylic acid cycle; succinate from succinyl-CoA (ligase route): step 1/1. In terms of biological role, succinyl-CoA synthetase functions in the citric acid cycle (TCA), coupling the hydrolysis of succinyl-CoA to the synthesis of either ATP or GTP and thus represents the only step of substrate-level phosphorylation in the TCA. The beta subunit provides nucleotide specificity of the enzyme and binds the substrate succinate, while the binding sites for coenzyme A and phosphate are found in the alpha subunit. The chain is Succinate--CoA ligase [ADP-forming] subunit beta from Campylobacter jejuni subsp. jejuni serotype O:6 (strain 81116 / NCTC 11828).